The chain runs to 256 residues: 5-oxoprolinase subunit A 3 (256 aa).

It belongs to the LamB/PxpA family. Forms a complex composed of PxpA, PxpB and PxpC.

The enzyme catalyses 5-oxo-L-proline + ATP + 2 H2O = L-glutamate + ADP + phosphate + H(+). In terms of biological role, catalyzes the cleavage of 5-oxoproline to form L-glutamate coupled to the hydrolysis of ATP to ADP and inorganic phosphate. The polypeptide is 5-oxoprolinase subunit A 3 (Pseudomonas syringae pv. tomato (strain ATCC BAA-871 / DC3000)).